Reading from the N-terminus, the 177-residue chain is Large ribosomal subunit protein uL22 (177 aa).

Positions 118–177 (VESRPSREGRRGGAGESAGGARARRAQGSKAAAAKKAPASSSTKAATTTEASEEAKGGSQ) are disordered. The span at 121 to 130 (RPSREGRRGG) shows a compositional bias: basic and acidic residues. Over residues 145-167 (GSKAAAAKKAPASSSTKAATTTE) the composition is skewed to low complexity.

It belongs to the universal ribosomal protein uL22 family. In terms of assembly, part of the 50S ribosomal subunit.

This protein binds specifically to 23S rRNA; its binding is stimulated by other ribosomal proteins, e.g. L4, L17, and L20. It is important during the early stages of 50S assembly. It makes multiple contacts with different domains of the 23S rRNA in the assembled 50S subunit and ribosome. In terms of biological role, the globular domain of the protein is located near the polypeptide exit tunnel on the outside of the subunit, while an extended beta-hairpin is found that lines the wall of the exit tunnel in the center of the 70S ribosome. This is Large ribosomal subunit protein uL22 from Mycobacterium sp. (strain JLS).